The chain runs to 224 residues: Ribose-5-phosphate isomerase A (224 aa).

Residues Thr32 to Thr35, Asp85 to Asp88, and Lys98 to Gly101 each bind substrate. Residue Glu107 is the Proton acceptor of the active site. Position 125 (Lys125) interacts with substrate.

The protein belongs to the ribose 5-phosphate isomerase family. In terms of assembly, homodimer.

The enzyme catalyses aldehydo-D-ribose 5-phosphate = D-ribulose 5-phosphate. It functions in the pathway carbohydrate degradation; pentose phosphate pathway; D-ribose 5-phosphate from D-ribulose 5-phosphate (non-oxidative stage): step 1/1. Functionally, catalyzes the reversible conversion of ribose-5-phosphate to ribulose 5-phosphate. In Pseudomonas putida (strain W619), this protein is Ribose-5-phosphate isomerase A.